Consider the following 2602-residue polypeptide: Filamin-B (2602 aa).

The actin-binding stretch occupies residues 1–239; sequence MPVTEKDLAE…VMTYLSQFPK (239 aa). Calponin-homology (CH) domains follow at residues 16 to 122 and 139 to 242; these read KIQQ…LHYS and QTPK…KAKL. Thr-216 carries the phosphothreonine modification. Residues 244 to 267 form a disordered region; the sequence is PGAPLKPKLNPKKARAYGRGIEPT. Filamin repeat units follow at residues 249 to 347, 349 to 446, 447 to 543, 544 to 636, 640 to 736, 737 to 839, 840 to 938, 939 to 1034, 1035 to 1127, 1128 to 1222, 1223 to 1322, 1323 to 1415, 1416 to 1511, 1512 to 1608, and 1609 to 1704; these read KPKL…EVNV, KAQG…GVQI, GEAC…EVQV, GPEA…MAFI, TGDY…RVNI, GQGS…RVKV, DPSH…TVGV, AAPL…TVEA, SLPP…KADI, EMPF…WVKV, EPAI…KVAV, TEGC…RVPS, KDVV…KVKV, LPTY…RIRA, and TQTG…TVMA. Thr-519 is modified (phosphothreonine). Lys-681 carries the post-translational modification N6-acetyllysine. Ser-730 is subject to Phosphoserine. Over residues 837 to 850 the composition is skewed to basic and acidic residues; that stretch reads VKVDPSHDASKVKA. The disordered stretch occupies residues 837-862; the sequence is VKVDPSHDASKVKAEGPGLSKAGVEN. Residues Ser-886, Ser-932, Ser-983, and Ser-1028 each carry the phosphoserine modification. Residue Thr-1307 is modified to Phosphothreonine. Residue Ser-1316 is modified to Phosphoserine. Phosphoserine is present on residues Ser-1433, Ser-1505, and Ser-1602. Positions 1705–1728 are hinge 1; it reads TDGEVTAMEEAPVNACPPGFRPWV. Filamin repeat units lie at residues 1729–1813, 1816–1908, 1919–1994, 1997–2089, 2091–2185, 2188–2280, 2282–2375, and 2379–2471; these read TEEA…SPLQ, VNYP…TAKI, KLGS…SIMV, SEIG…TVKI, GEGR…QFTV, LGEG…LVPV, APSD…KVRV, and GQAG…KAKV. The residue at position 1780 (Lys-1780) is an N6-acetyllysine. Residues Ser-2083 and Ser-2113 each carry the phosphoserine modification. Phosphoserine is present on residues Ser-2369 and Ser-2465. Lys-2468 participates in a covalent cross-link: Glycyl lysine isopeptide (Lys-Gly) (interchain with G-Cter in ISG15). The interval 2472-2506 is hinge 2; that stretch reads TGQRLVSPGSANETSSILVESVTRSSTETCYSAIP. The tract at residues 2472-2602 is self-association site, tail; the sequence is TGQRLVSPGS…PGSPFHVTVP (131 aa). A phosphoserine mark is found at Ser-2478, Ser-2481, and Ser-2492. One copy of the Filamin 24 repeat lies at 2507 to 2601; that stretch reads KSSSDASKVT…IPGSPFHVTV (95 aa). 2 positions are modified to N6-succinyllysine: Lys-2518 and Lys-2524. Residue Lys-2576 is modified to N6-acetyllysine.

This sequence belongs to the filamin family. In terms of assembly, homodimer. Interacts with FLNA, FLNC, INPPL1, ITGB1A, ITGB1D, ITGB3, ITGB6, MYOT, MYOZ1, PSEN1 and PSEN2. Interacts with MICALL2. Interacts with RFLNA and RFLNB. Interacts with ASB2 isoform 1; the interaction targets FLNB for proteasomal degradation. In terms of processing, ISGylation prevents ability to interact with the upstream activators of the JNK cascade and inhibits IFNA-induced JNK signaling. Ubiquitination by a SCF-like complex containing ASB2 isoform 1 leads to proteasomal degradation which promotes muscle differentiation. In terms of tissue distribution, expressed in hippocampus, cortex, cerebellar Purkinje cells and granule cell layers.

The protein resides in the cytoplasm. The protein localises to the cell cortex. It localises to the cytoskeleton. It is found in the stress fiber. Its subcellular location is the myofibril. The protein resides in the sarcomere. The protein localises to the z line. Connects cell membrane constituents to the actin cytoskeleton. May promote orthogonal branching of actin filaments and links actin filaments to membrane glycoproteins. Anchors various transmembrane proteins to the actin cytoskeleton. This chain is Filamin-B (Flnb), found in Mus musculus (Mouse).